Reading from the N-terminus, the 932-residue chain is Isoleucine--tRNA ligase (932 aa).

Residues 58-68 (PYANGDIHIGH) carry the 'HIGH' region motif. E559 lines the L-isoleucyl-5'-AMP pocket. Residues 600-604 (KMSKS) carry the 'KMSKS' region motif. K603 is a binding site for ATP. C895, C898, C915, and C918 together coordinate Zn(2+).

This sequence belongs to the class-I aminoacyl-tRNA synthetase family. IleS type 1 subfamily. Monomer. It depends on Zn(2+) as a cofactor.

The protein localises to the cytoplasm. It catalyses the reaction tRNA(Ile) + L-isoleucine + ATP = L-isoleucyl-tRNA(Ile) + AMP + diphosphate. Its function is as follows. Catalyzes the attachment of isoleucine to tRNA(Ile). As IleRS can inadvertently accommodate and process structurally similar amino acids such as valine, to avoid such errors it has two additional distinct tRNA(Ile)-dependent editing activities. One activity is designated as 'pretransfer' editing and involves the hydrolysis of activated Val-AMP. The other activity is designated 'posttransfer' editing and involves deacylation of mischarged Val-tRNA(Ile). The sequence is that of Isoleucine--tRNA ligase from Saccharophagus degradans (strain 2-40 / ATCC 43961 / DSM 17024).